Reading from the N-terminus, the 160-residue chain is Endoribonuclease YbeY (160 aa).

Zn(2+)-binding residues include H121, H125, and H131.

Belongs to the endoribonuclease YbeY family. The cofactor is Zn(2+).

It localises to the cytoplasm. Its function is as follows. Single strand-specific metallo-endoribonuclease involved in late-stage 70S ribosome quality control and in maturation of the 3' terminus of the 16S rRNA. This is Endoribonuclease YbeY from Syntrophus aciditrophicus (strain SB).